The following is a 100-amino-acid chain: MQLTPQEKDKLLIFTAALVAERRKNRGLKLNYPEAVAYISAAILEGARDGNTVAELMSYGTTLLTRDDVMEGIAEMVHEVQVEATFPDGTKLVTVHNPIR.

The protein belongs to the urease gamma subunit family. In terms of assembly, heterotrimer of UreA (gamma), UreB (beta) and UreC (alpha) subunits. Three heterotrimers associate to form the active enzyme.

It is found in the cytoplasm. It catalyses the reaction urea + 2 H2O + H(+) = hydrogencarbonate + 2 NH4(+). It functions in the pathway nitrogen metabolism; urea degradation; CO(2) and NH(3) from urea (urease route): step 1/1. In Trichormus variabilis (strain ATCC 29413 / PCC 7937) (Anabaena variabilis), this protein is Urease subunit gamma.